Here is a 427-residue protein sequence, read N- to C-terminus: Mitochondrial distribution and morphology protein 10 (427 aa).

Low complexity predominate over residues 393–414 (SSYANSQATAGAQGSSGGPPTS). Residues 393 to 427 (SSYANSQATAGAQGSSGGPPTSYWRGVGVSVSYSS) form a disordered region.

The protein belongs to the MDM10 family. In terms of assembly, component of the ER-mitochondria encounter structure (ERMES) or MDM complex, composed of mmm1, mdm10, mdm12 and mdm34. Associates with the mitochondrial outer membrane sorting assembly machinery SAM(core) complex.

Its subcellular location is the mitochondrion outer membrane. Component of the ERMES/MDM complex, which serves as a molecular tether to connect the endoplasmic reticulum and mitochondria. Components of this complex are involved in the control of mitochondrial shape and protein biogenesis and may function in phospholipid exchange. mdm10 is involved in the late assembly steps of the general translocase of the mitochondrial outer membrane (TOM complex). Functions in the tom40-specific route of the assembly of outer membrane beta-barrel proteins, including the association of tom40 with the receptor tom22 and small TOM proteins. Can associate with the SAM(core) complex as well as the mdm12-mmm1 complex, both involved in late steps of the major beta-barrel assembly pathway, that is responsible for biogenesis of all outer membrane beta-barrel proteins. May act as a switch that shuttles between both complexes and channels precursor proteins into the tom40-specific pathway. Plays a role in mitochondrial morphology and in the inheritance of mitochondria. The polypeptide is Mitochondrial distribution and morphology protein 10 (mdmB) (Emericella nidulans (strain FGSC A4 / ATCC 38163 / CBS 112.46 / NRRL 194 / M139) (Aspergillus nidulans)).